The primary structure comprises 352 residues: UDP-N-acetylglucosamine--N-acetylmuramyl-(pentapeptide) pyrophosphoryl-undecaprenol N-acetylglucosamine transferase (352 aa).

UDP-N-acetyl-alpha-D-glucosamine contacts are provided by Ser-195 and Gln-287.

Belongs to the glycosyltransferase 28 family. MurG subfamily.

It localises to the cell membrane. It carries out the reaction Mur2Ac(oyl-L-Ala-gamma-D-Glu-L-Lys-D-Ala-D-Ala)-di-trans,octa-cis-undecaprenyl diphosphate + UDP-N-acetyl-alpha-D-glucosamine = beta-D-GlcNAc-(1-&gt;4)-Mur2Ac(oyl-L-Ala-gamma-D-Glu-L-Lys-D-Ala-D-Ala)-di-trans,octa-cis-undecaprenyl diphosphate + UDP + H(+). Its pathway is cell wall biogenesis; peptidoglycan biosynthesis. Cell wall formation. Catalyzes the transfer of a GlcNAc subunit on undecaprenyl-pyrophosphoryl-MurNAc-pentapeptide (lipid intermediate I) to form undecaprenyl-pyrophosphoryl-MurNAc-(pentapeptide)GlcNAc (lipid intermediate II). The chain is UDP-N-acetylglucosamine--N-acetylmuramyl-(pentapeptide) pyrophosphoryl-undecaprenol N-acetylglucosamine transferase from Streptococcus pneumoniae (strain Hungary19A-6).